A 215-amino-acid polypeptide reads, in one-letter code: Protein-L-isoaspartate O-methyltransferase (215 aa).

The active site involves serine 62.

It belongs to the methyltransferase superfamily. L-isoaspartyl/D-aspartyl protein methyltransferase family.

It localises to the cytoplasm. It carries out the reaction [protein]-L-isoaspartate + S-adenosyl-L-methionine = [protein]-L-isoaspartate alpha-methyl ester + S-adenosyl-L-homocysteine. In terms of biological role, catalyzes the methyl esterification of L-isoaspartyl residues in peptides and proteins that result from spontaneous decomposition of normal L-aspartyl and L-asparaginyl residues. It plays a role in the repair and/or degradation of damaged proteins. In Bradyrhizobium sp. (strain ORS 278), this protein is Protein-L-isoaspartate O-methyltransferase.